We begin with the raw amino-acid sequence, 156 residues long: ATP synthase subunit b 2 (156 aa).

The chain crosses the membrane as a helical span at residues Leu7–Val29.

It belongs to the ATPase B chain family. F-type ATPases have 2 components, F(1) - the catalytic core - and F(0) - the membrane proton channel. F(1) has five subunits: alpha(3), beta(3), gamma(1), delta(1), epsilon(1). F(0) has three main subunits: a(1), b(2) and c(10-14). The alpha and beta chains form an alternating ring which encloses part of the gamma chain. F(1) is attached to F(0) by a central stalk formed by the gamma and epsilon chains, while a peripheral stalk is formed by the delta and b chains.

The protein resides in the cell inner membrane. In terms of biological role, f(1)F(0) ATP synthase produces ATP from ADP in the presence of a proton or sodium gradient. F-type ATPases consist of two structural domains, F(1) containing the extramembraneous catalytic core and F(0) containing the membrane proton channel, linked together by a central stalk and a peripheral stalk. During catalysis, ATP synthesis in the catalytic domain of F(1) is coupled via a rotary mechanism of the central stalk subunits to proton translocation. Component of the F(0) channel, it forms part of the peripheral stalk, linking F(1) to F(0). The polypeptide is ATP synthase subunit b 2 (Marinomonas sp. (strain MWYL1)).